Reading from the N-terminus, the 154-residue chain is Urease accessory protein UreE (154 aa).

It belongs to the UreE family.

Its subcellular location is the cytoplasm. Its function is as follows. Involved in urease metallocenter assembly. Binds nickel. Probably functions as a nickel donor during metallocenter assembly. The sequence is that of Urease accessory protein UreE from Prochlorococcus marinus subsp. pastoris (strain CCMP1986 / NIES-2087 / MED4).